We begin with the raw amino-acid sequence, 304 residues long: N-carbamoyl-D-amino acid hydrolase (304 aa).

A CN hydrolase domain is found at 5 to 276 (MILAVGQQGP…DEVITAAVDL (272 aa)). Catalysis depends on residues glutamate 47, lysine 127, and cysteine 172.

Homotetramer.

The catalysed reaction is an N-carbamoyl-D-amino acid + H2O + 2 H(+) = a D-alpha-amino acid + NH4(+) + CO2. Its function is as follows. The enzyme catalyzes the hydrolysis of N-carbamoyl-D-amino acids to the corresponding which are useful intermediates in the preparation of beta-lactam antibiotics. Industrial production of beta-lactam antibiotics is now being developed using this enzyme. The chain is N-carbamoyl-D-amino acid hydrolase from Rhizobium radiobacter (Agrobacterium tumefaciens).